The following is a 485-amino-acid chain: Proline--tRNA ligase (485 aa).

The protein belongs to the class-II aminoacyl-tRNA synthetase family. ProS type 3 subfamily. Homodimer.

It localises to the cytoplasm. The catalysed reaction is tRNA(Pro) + L-proline + ATP = L-prolyl-tRNA(Pro) + AMP + diphosphate. Functionally, catalyzes the attachment of proline to tRNA(Pro) in a two-step reaction: proline is first activated by ATP to form Pro-AMP and then transferred to the acceptor end of tRNA(Pro). In Methanopyrus kandleri (strain AV19 / DSM 6324 / JCM 9639 / NBRC 100938), this protein is Proline--tRNA ligase.